Reading from the N-terminus, the 978-residue chain is Receptor like protein 21 (978 aa).

The first 27 residues, 1–27 (MLLAMEGKLFLCQYLIWVMLLLGQLHG), serve as a signal peptide directing secretion. Over 28–930 (CTSCIEKERE…EEDDKAAIDM (903 aa)) the chain is Extracellular. N64, N79, N102, N116, and N155 each carry an N-linked (GlcNAc...) asparagine glycan. 28 LRR repeats span residues 141–167 (LRNL…AATS), 169–189 (TTLI…GLKD), 190–213 (LTNL…LIHL), 214–237 (KKLK…ELQN), 238–262 (LINL…VFCK), 264–287 (KNLR…LGSL), 288–310 (KKLR…SFSS), 312–335 (ESLE…PLTN), 337–361 (TNLK…TWQP), 362–385 (NFQL…LLYQ), 386–409 (KKLR…LLTN), 410–432 (NPEL…PTMV), 433–455 (HNLQ…MDHA), 457–480 (PNLV…IGEM), 481–504 (KNIS…FVTG), 506–529 (VSIM…ETNF), 530–553 (PSLD…LSNS), 554–577 (TMLR…LFEF), 579–601 (YLDY…LLGM), 602–625 (PFLS…VDSE), 627–646 (GIYM…DTLL), 647–671 (KSVQ…DTQS), 673–693 (NILL…LCDL), 694–716 (SNVR…CLSN), 788–811 (LRLM…ELGD), 812–835 (LLKL…SFSK), 837–859 (IDVE…LLSS), and 860–885 (LTSL…QFNT). A glycan (N-linked (GlcNAc...) asparagine) is linked at N204. N335 carries an N-linked (GlcNAc...) asparagine glycan. Residues N397 and N420 are each glycosylated (N-linked (GlcNAc...) asparagine). N463, N482, and N492 each carry an N-linked (GlcNAc...) asparagine glycan. N-linked (GlcNAc...) asparagine glycosylation occurs at N552. An N-linked (GlcNAc...) asparagine glycan is attached at N636. 2 N-linked (GlcNAc...) asparagine glycosylation sites follow: N681 and N716. N819 carries N-linked (GlcNAc...) asparagine glycosylation. N872 carries N-linked (GlcNAc...) asparagine glycosylation. A disordered region spans residues 902 to 922 (TSRSCETNKSPEEADNGQEEE). The helical transmembrane segment at 931–951 (MVFYFSTASIYVTALIGVLVL) threads the bilayer. The Cytoplasmic portion of the chain corresponds to 952–978 (MCFDCPWRRAWLRIVDAFIASAKHVLP).

This sequence belongs to the RLP family.

The protein localises to the cell membrane. In Arabidopsis thaliana (Mouse-ear cress), this protein is Receptor like protein 21.